A 334-amino-acid polypeptide reads, in one-letter code: Glycerol-1-phosphate dehydrogenase [NAD(P)+] (334 aa).

NAD(+) contacts are provided by residues 77–81 (GRPID) and 99–102 (TTAS). Asp104 is a binding site for substrate. Residue Ser108 coordinates NAD(+). Asp147 contacts substrate. Zn(2+)-binding residues include Asp147 and His225. Residue His229 coordinates substrate. Zn(2+) is bound at residue His246.

Belongs to the glycerol-1-phosphate dehydrogenase family. The cofactor is Zn(2+).

It is found in the cytoplasm. The enzyme catalyses sn-glycerol 1-phosphate + NAD(+) = dihydroxyacetone phosphate + NADH + H(+). The catalysed reaction is sn-glycerol 1-phosphate + NADP(+) = dihydroxyacetone phosphate + NADPH + H(+). The protein operates within membrane lipid metabolism; glycerophospholipid metabolism. Its function is as follows. Catalyzes the NAD(P)H-dependent reduction of dihydroxyacetonephosphate (DHAP or glycerone phosphate) to glycerol 1-phosphate (G1P). The G1P thus generated is used as the glycerophosphate backbone of phospholipids in the cellular membranes of Archaea. The chain is Glycerol-1-phosphate dehydrogenase [NAD(P)+] from Methanococcus maripaludis (strain C6 / ATCC BAA-1332).